A 255-amino-acid chain; its full sequence is Hydroxyacylglutathione hydrolase (255 aa).

Zn(2+) contacts are provided by His-56, His-58, Asp-60, His-61, His-114, Asp-133, and His-171.

It belongs to the metallo-beta-lactamase superfamily. Glyoxalase II family. As to quaternary structure, monomer. Zn(2+) is required as a cofactor.

It catalyses the reaction an S-(2-hydroxyacyl)glutathione + H2O = a 2-hydroxy carboxylate + glutathione + H(+). The protein operates within secondary metabolite metabolism; methylglyoxal degradation; (R)-lactate from methylglyoxal: step 2/2. Functionally, thiolesterase that catalyzes the hydrolysis of S-D-lactoyl-glutathione to form glutathione and D-lactic acid. The chain is Hydroxyacylglutathione hydrolase from Rhodopseudomonas palustris (strain ATCC BAA-98 / CGA009).